Reading from the N-terminus, the 418-residue chain is Serine hydroxymethyltransferase (418 aa).

Residues Leu121 and Gly125–Leu127 each bind (6S)-5,6,7,8-tetrahydrofolate. Lys230 bears the N6-(pyridoxal phosphate)lysine mark. A (6S)-5,6,7,8-tetrahydrofolate-binding site is contributed by Ser356–Phe358.

Belongs to the SHMT family. As to quaternary structure, homodimer. Pyridoxal 5'-phosphate serves as cofactor.

It is found in the cytoplasm. The catalysed reaction is (6R)-5,10-methylene-5,6,7,8-tetrahydrofolate + glycine + H2O = (6S)-5,6,7,8-tetrahydrofolate + L-serine. It functions in the pathway one-carbon metabolism; tetrahydrofolate interconversion. Its pathway is amino-acid biosynthesis; glycine biosynthesis; glycine from L-serine: step 1/1. Functionally, catalyzes the reversible interconversion of serine and glycine with tetrahydrofolate (THF) serving as the one-carbon carrier. This reaction serves as the major source of one-carbon groups required for the biosynthesis of purines, thymidylate, methionine, and other important biomolecules. Also exhibits THF-independent aldolase activity toward beta-hydroxyamino acids, producing glycine and aldehydes, via a retro-aldol mechanism. This chain is Serine hydroxymethyltransferase, found in Shewanella halifaxensis (strain HAW-EB4).